A 569-amino-acid chain; its full sequence is Glycylpeptide N-tetradecanoyltransferase (569 aa).

Over residues 1 to 18 (MPPTEESKPVDPAQEKQA) the composition is skewed to basic and acidic residues. Positions 1–82 (MPPTEESKPV…STESSAEVGL (82 aa)) are disordered. A compositionally biased stretch (basic residues) spans 55–68 (TKKKNKKKSKKKNK). Tetradecanoyl-CoA is bound by residues 158 to 161 (YKFW), 291 to 293 (LCI), and 299 to 303 (GKRLA). The active-site Proton acceptor; via carboxylate is Val569.

The protein belongs to the NMT family. Monomer.

Its subcellular location is the cytoplasm. It catalyses the reaction N-terminal glycyl-[protein] + tetradecanoyl-CoA = N-tetradecanoylglycyl-[protein] + CoA + H(+). Adds a myristoyl group to the N-terminal glycine residue of certain cellular proteins. This is Glycylpeptide N-tetradecanoyltransferase (gtt-1) from Neurospora crassa (strain ATCC 24698 / 74-OR23-1A / CBS 708.71 / DSM 1257 / FGSC 987).